A 656-amino-acid polypeptide reads, in one-letter code: MRRAVGFPALCLLLNLHAAGCFSRNNDHFLAIRQKKSWKPVFIYDHSQDIKKSLDIAQEAYKHNYHSPSEVQISKHHQIINSAFPRPAYDPSLNLLAESDQDLEIENLPIPAANVIVVTLQMDITKLNITLLRIFRQGVAAALGLLPQQVHINRLIEKKNQVELFVSPGNRKPGETQALQAEEVLRSLNVDGLHQSLPQFGITDVAPEKNVLQGQHEADKIWSKEGFYAVVIFLSIFIIIVTCLMIIYRLKERLQLSLRQDKEKNQEIHLSPIARQQAQSEAKTTHSMVQPDQAPKVLNVVVDPQGQCTPEIRNSTSTSVCPSPFRMKPIGLQERRGSNVSLTLDMSSLGSVEPFVAVSTPREKVAMEYLQSASRVLTRSQLRDVVASSHLLQSEFMEIPMNFVDPKEIDIPRHGTKNRYKTILPNPLSRVCLRPKNITDSLSTYINANYIRGYSGKEKAFIATQGPMINTVNDFWQMVWQEDSPVIVMITKLKEKNEKCVLYWPEKRGIYGKVEVLVTGVTECDNYTIRNLVLKQGSHTQHVKHYWYTSWPDHKTPDSAQPLLQLMLDVEEDRLASEGRGPVVVHCSAGIGRTGCFIATSIGCQQLKEEGVVDALSIVCQLRVDRGGMVQTSEQYEFVHHALCLFESRLSPETVE.

An N-terminal signal peptide occupies residues 1–23 (MRRAVGFPALCLLLNLHAAGCFS). A glycan (O-linked (Xyl...) (chondroitin sulfate) serine) is linked at S23. Residues 24–226 (RNNDHFLAIR…EADKIWSKEG (203 aa)) lie on the Extracellular side of the membrane. Residue N128 is glycosylated (N-linked (GlcNAc...) asparagine). Residues 227–247 (FYAVVIFLSIFIIIVTCLMII) traverse the membrane as a helical segment. Residues 248–656 (YRLKERLQLS…ESRLSPETVE (409 aa)) are Cytoplasmic-facing. A disordered region spans residues 269–289 (HLSPIARQQAQSEAKTTHSMV). Position 271 is a phosphoserine (S271). Polar residues predominate over residues 274 to 289 (ARQQAQSEAKTTHSMV). S338 is subject to Phosphoserine; by PKA. A Tyrosine-protein phosphatase domain is found at 392-646 (LQSEFMEIPM…EFVHHALCLF (255 aa)). Substrate is bound by residues D553, 587-593 (CSAGIGR), and Q631. C587 serves as the catalytic Phosphocysteine intermediate.

Belongs to the protein-tyrosine phosphatase family. Receptor class 7 subfamily. In terms of assembly, interacts with MAPKs. In terms of tissue distribution, expressed in the heart, brain, spleen, lung, liver, skeletal muscle, kidney and testis. Isoform alpha is expressed throughout the granular layer of the cerebellar but not within the Purkinje cells, also in the villi of the ileum and jejunum and both the villi and crypts of the duodenum. Isoform beta is expressed only in the Purkinje cells. Isoform gamma is expressed throughout the brain, the villi and crypts of the duodenum, jejunum and ileum and expressed at low levels in the proximal colon.

It is found in the cell membrane. The protein resides in the cytoplasm. It catalyses the reaction O-phospho-L-tyrosyl-[protein] + H2O = L-tyrosyl-[protein] + phosphate. In terms of biological role, sequesters mitogen-activated protein kinases (MAPKs) such as MAPK1, MAPK3 and MAPK14 in the cytoplasm in an inactive form. The MAPKs bind to a dephosphorylated kinase interacting motif, phosphorylation of which by the protein kinase A complex releases the MAPKs for activation and translocation into the nucleus. Isoform gamma may have a role in patterning and cellular proliferation of skeletal elements in the precartilaginous/cartilaginous skeleton. The protein is Receptor-type tyrosine-protein phosphatase R (Ptprr) of Mus musculus (Mouse).